The sequence spans 283 residues: Bifunctional protein FolD (283 aa).

NADP(+)-binding positions include 165–167, serine 190, and isoleucine 231; that span reads GRS.

The protein belongs to the tetrahydrofolate dehydrogenase/cyclohydrolase family. In terms of assembly, homodimer.

The enzyme catalyses (6R)-5,10-methylene-5,6,7,8-tetrahydrofolate + NADP(+) = (6R)-5,10-methenyltetrahydrofolate + NADPH. The catalysed reaction is (6R)-5,10-methenyltetrahydrofolate + H2O = (6R)-10-formyltetrahydrofolate + H(+). The protein operates within one-carbon metabolism; tetrahydrofolate interconversion. Functionally, catalyzes the oxidation of 5,10-methylenetetrahydrofolate to 5,10-methenyltetrahydrofolate and then the hydrolysis of 5,10-methenyltetrahydrofolate to 10-formyltetrahydrofolate. The protein is Bifunctional protein FolD of Janthinobacterium sp. (strain Marseille) (Minibacterium massiliensis).